Here is a 183-residue protein sequence, read N- to C-terminus: uncharacterized protein (183 aa).

This is an uncharacterized protein from Archaeoglobus fulgidus (strain ATCC 49558 / DSM 4304 / JCM 9628 / NBRC 100126 / VC-16).